We begin with the raw amino-acid sequence, 174 residues long: ATP-dependent protease subunit HslV (174 aa).

Residue Thr2 is part of the active site. Positions 157, 160, and 163 each coordinate Na(+).

The protein belongs to the peptidase T1B family. HslV subfamily. In terms of assembly, a double ring-shaped homohexamer of HslV is capped on each side by a ring-shaped HslU homohexamer. The assembly of the HslU/HslV complex is dependent on binding of ATP.

It localises to the cytoplasm. The catalysed reaction is ATP-dependent cleavage of peptide bonds with broad specificity.. Allosterically activated by HslU binding. Its function is as follows. Protease subunit of a proteasome-like degradation complex believed to be a general protein degrading machinery. The protein is ATP-dependent protease subunit HslV of Shewanella oneidensis (strain ATCC 700550 / JCM 31522 / CIP 106686 / LMG 19005 / NCIMB 14063 / MR-1).